Consider the following 208-residue polypeptide: Small ribosomal subunit protein uS4 (208 aa).

The region spanning 99-165 (RRLDNVVFQL…PRLKEILSSL (67 aa)) is the S4 RNA-binding domain.

Belongs to the universal ribosomal protein uS4 family. In terms of assembly, part of the 30S ribosomal subunit. Contacts protein S5. The interaction surface between S4 and S5 is involved in control of translational fidelity.

Functionally, one of the primary rRNA binding proteins, it binds directly to 16S rRNA where it nucleates assembly of the body of the 30S subunit. Its function is as follows. With S5 and S12 plays an important role in translational accuracy. This chain is Small ribosomal subunit protein uS4, found in Desulfitobacterium hafniense (strain DSM 10664 / DCB-2).